The sequence spans 181 residues: Protein CRABS CLAW (181 aa).

The segment at 26-53 (CSICNTILAVGIPLKRMLDTVTVKCGHC) adopts a C4-type zinc-finger fold. Residues 80 to 122 (GSDYKKGSSSSSSSSTSSDQPPSPSPPFVVKPPEKKQRLPSAY) form a disordered region. The span at 87–99 (SSSSSSSSTSSDQ) shows a compositional bias: low complexity. Residues 100 to 109 (PPSPSPPFVV) are compositionally biased toward pro residues.

This sequence belongs to the YABBY family. As to expression, restricted to flowers, mostly in carpels and nectaries. Expressed at low levels in sepal primordia (buds), sepal receptacle and developing petal. Not detected in placental tissues, septum, stigma and ovules.

Its subcellular location is the nucleus. Its function is as follows. Transcription factor required for the initiation of nectary development. Also involved in suppressing early radial growth of the gynoecium, in promoting its later elongation and in fusion of its carpels by regulating both cell division and expansion. Establishes the polar differentiation in the carpels by specifying abaxial cell fate in the ovary wall. Regulates both cell division and expansion. In Arabidopsis thaliana (Mouse-ear cress), this protein is Protein CRABS CLAW.